Reading from the N-terminus, the 115-residue chain is NADH-ubiquinone oxidoreductase chain 3 (115 aa).

A run of 3 helical transmembrane segments spans residues 3–23 (LLLT…IAFW), 55–75 (FFLV…LLPL), and 84–104 (LNTM…SLAY).

It belongs to the complex I subunit 3 family. Core subunit of respiratory chain NADH dehydrogenase (Complex I) which is composed of 45 different subunits. Interacts with TMEM186. Interacts with TMEM242.

Its subcellular location is the mitochondrion inner membrane. The catalysed reaction is a ubiquinone + NADH + 5 H(+)(in) = a ubiquinol + NAD(+) + 4 H(+)(out). In terms of biological role, core subunit of the mitochondrial membrane respiratory chain NADH dehydrogenase (Complex I) which catalyzes electron transfer from NADH through the respiratory chain, using ubiquinone as an electron acceptor. Essential for the catalytic activity of complex I. The protein is NADH-ubiquinone oxidoreductase chain 3 of Balaenoptera musculus (Blue whale).